Consider the following 196-residue polypeptide: Probable malonic semialdehyde reductase RutE (196 aa).

This sequence belongs to the nitroreductase family. HadB/RutE subfamily. FMN is required as a cofactor.

The catalysed reaction is 3-hydroxypropanoate + NADP(+) = 3-oxopropanoate + NADPH + H(+). In terms of biological role, may reduce toxic product malonic semialdehyde to 3-hydroxypropionic acid, which is excreted. This chain is Probable malonic semialdehyde reductase RutE, found in Escherichia coli O45:K1 (strain S88 / ExPEC).